Consider the following 968-residue polypeptide: Ribonuclease E (968 aa).

An S1 motif domain is found at 39-119 (SNIYKGKITR…GTKGAALTTF (81 aa)). Mg(2+) contacts are provided by Asp-303 and Asp-346. The Zn(2+) site is built by Cys-404 and Cys-407. Residues 404–407 (CPRC) form a required for zinc-mediated homotetramerization and catalytic activity region. Residues 947 to 968 (IKNSAGAHSATNFSTSPVKKSE) form a disordered region. The span at 955–968 (SATNFSTSPVKKSE) shows a compositional bias: polar residues.

Belongs to the RNase E/G family. RNase E subfamily. Component of the RNA degradosome, which is a multiprotein complex involved in RNA processing and mRNA degradation. Within the RNA degradosome, RNase E assembles into a homotetramer formed by a dimer of dimers. Zn(2+) serves as cofactor. Requires Mg(2+) as cofactor.

The protein localises to the cytoplasm. It is found in the cell inner membrane. The enzyme catalyses Endonucleolytic cleavage of single-stranded RNA in A- and U-rich regions.. Endoribonuclease that plays a central role in RNA processing and decay. Required for the maturation of 5S and 16S rRNAs and the majority of tRNAs. Also involved in the degradation of most mRNAs. The sequence is that of Ribonuclease E from Buchnera aphidicola subsp. Schizaphis graminum (strain Sg).